We begin with the raw amino-acid sequence, 70 residues long: Melittin (70 aa).

An N-terminal signal peptide occupies residues 1–21 (MKFLVNVALVFMVVYISYIYA). The propeptide at 22–43 (APEPEPAPEPEAEADAEADPEA) is removed by a dipeptidylpeptidase. An N-formylglycine; partial modification is found at glycine 44. Glutamine 69 is modified (glutamine amide).

Belongs to the melittin family. As to quaternary structure, monomer (in solution and for integration into membranes), homotetramer (in solution and potentially as a toroidal pore in membranes), and potenially homomultimer (as a toroidal pore in membranes). Expressed by the venom gland.

It localises to the secreted. The protein localises to the target cell membrane. In terms of biological role, melittin: Main toxin of bee venom with strong antimicrobial activity and hemolytic activity. It has enhancing effects on bee venom phospholipase A2 activity. This amphipathic toxin binds to negatively charged membrane surface and forms pore by inserting into lipid bilayers inducing the leakage of ions and molecules and the enhancement of permeability that ultimately leads to cell lysis. It acts as a voltage-gated pore with higher selectivity for anions over cations. The ion conductance has been shown to be voltage-dependent. Self-association of melittin in membranes is promoted by high ionic strength, but not by the presence of negatively charged lipids. In vivo, intradermal injection into healthy human volunteers produce sharp pain sensation and an inflammatory response. It produces pain by activating primary nociceptor cells directly and indirectly due to its ability to activate plasma membrane phospholipase A2 and its pore-forming activity. In the context of inflammation and cancer tests, is highly cytotoxic to normal cells, highly induces calcium signaling and almost completely prevents cAMP production. In addition, prevents LPS-induced nitric oxid (NO) synthesis but does not affect the IP3 signaling and pro-inflammatory activation of endothelial cells. Also shows significant antiproliferative activity on the breast cancer cell line MDA-MB-231. Melittin-S: 1.4-fold less hemolytic and adopts a less organized secondary structure than melittin. Its function is as follows. Melittin-2: Has strong hemolytic activity. The protein is Melittin (MELT) of Apis mellifera (Honeybee).